Reading from the N-terminus, the 437-residue chain is UDP-N-acetylmuramate--L-alanine ligase (437 aa).

108–114 (GAHGKTS) lines the ATP pocket.

Belongs to the MurCDEF family.

It is found in the cytoplasm. The catalysed reaction is UDP-N-acetyl-alpha-D-muramate + L-alanine + ATP = UDP-N-acetyl-alpha-D-muramoyl-L-alanine + ADP + phosphate + H(+). It functions in the pathway cell wall biogenesis; peptidoglycan biosynthesis. Functionally, cell wall formation. This Staphylococcus saprophyticus subsp. saprophyticus (strain ATCC 15305 / DSM 20229 / NCIMB 8711 / NCTC 7292 / S-41) protein is UDP-N-acetylmuramate--L-alanine ligase.